Reading from the N-terminus, the 57-residue chain is Large ribosomal subunit protein bL32 (57 aa).

It belongs to the bacterial ribosomal protein bL32 family.

The polypeptide is Large ribosomal subunit protein bL32 (Staphylococcus epidermidis (strain ATCC 35984 / DSM 28319 / BCRC 17069 / CCUG 31568 / BM 3577 / RP62A)).